We begin with the raw amino-acid sequence, 454 residues long: MKAPPPPSPVAKRARVSPFVFLLVLFLLLFSFLYGEDLKELLGSQAQARPSLHFNAAAAGDGIELPAATAATTEGRTTTRRWRGRLPFAANGDGEEEEEECDVFSGRWVRDEAARPLYREADCPYIPAQLACEAHGRPETAYQRWRWQPRGCALPAFDAAAMLDRLRGKRVMFVGDSLGRGQFTSLVCLLLAAVPDPAARSFATSPDQQRSVFTAAAYNATVEFYWAPFLLQSNADNAAVHRISDRMVRRGSIGHHGRHWEGADVIVFNTYLWWCTGLQFRILEDGPFDAGGNSSTTTWVSTEEAYAMAFREMLQWAREHMDFATTRVFFTSMSPTHGKSQDWGGGEPGGNCYGETEMIGDAAYWGSDSRRGVMRAIGEVLDGDGADVPVTFLNVTQLSLYRKDAHTSVYKKQWTPPTPEQLADPKTYADCVHWCLPGLQDTWNELLYTKLFYP.

Residues 1–15 (MKAPPPPSPVAKRAR) are Cytoplasmic-facing. The helical; Signal-anchor for type II membrane protein transmembrane segment at 16–36 (VSPFVFLLVLFLLLFSFLYGE) threads the bilayer. Topologically, residues 37–454 (DLKELLGSQA…ELLYTKLFYP (418 aa)) are lumenal. Intrachain disulfides connect C101–C152, C123–C188, C132–C435, and C352–C431. A GDS motif motif is present at residues 175-177 (GDS). Residue S177 is the Nucleophile of the active site. N-linked (GlcNAc...) asparagine glycans are attached at residues N219, N293, and N394. Catalysis depends on D430, which acts as the Proton donor. The DXXH motif signature appears at 430–433 (DCVH). The Proton acceptor role is filled by H433.

This sequence belongs to the PC-esterase family. TBL subfamily.

It is found in the golgi apparatus membrane. Probable xylan acetyltransferase required for 2-O- and 3-O-monoacetylation of xylosyl residues in xylan. Possesses extremely low activity in vitro. This chain is Probable xylan O-acetyltransferase 9, found in Oryza sativa subsp. japonica (Rice).